The following is a 612-amino-acid chain: UvrABC system protein C (612 aa).

The GIY-YIG domain occupies 18–96; that stretch reads TRPGVYRMMD…IKTLKPPYNI (79 aa). One can recognise a UVR domain in the interval 208-243; the sequence is PEIINETIQQMEVASAQLDFERAAVLRDQVDYLRRV.

Belongs to the UvrC family. In terms of assembly, interacts with UvrB in an incision complex.

The protein resides in the cytoplasm. The UvrABC repair system catalyzes the recognition and processing of DNA lesions. UvrC both incises the 5' and 3' sides of the lesion. The N-terminal half is responsible for the 3' incision and the C-terminal half is responsible for the 5' incision. In Hahella chejuensis (strain KCTC 2396), this protein is UvrABC system protein C.